Here is a 69-residue protein sequence, read N- to C-terminus: FXYD domain-containing ion transport regulator 11 (69 aa).

An N-terminal signal peptide occupies residues 1 to 22 (MSQLTELVLLTVFLALFSRAEA). At 23–33 (NPFVYNYEALR) the chain is on the extracellular side. The chain crosses the membrane as a helical span at residues 34–54 (IGGLVFTCVLVAGAVTALCWG). At 55-69 (QCKPKRKHDDDASKI) the chain is on the cytoplasmic side.

The protein belongs to the FXYD family. In terms of tissue distribution, detected in adult gill and in larval skin at 2 days post-fertilization (at protein level). In adult gill, strong expression is found in the basal regions of the secondary lamellae.

Its subcellular location is the cell membrane. May modulate the activity of a sodium/potassium-transporting ATPase. The chain is FXYD domain-containing ion transport regulator 11 from Danio rerio (Zebrafish).